Consider the following 404-residue polypeptide: Acetate kinase (404 aa).

Mg(2+) is bound at residue N8. Residue K15 participates in ATP binding. R92 is a binding site for substrate. The Proton donor/acceptor role is filled by D149. Residues 207-211, 282-284, and 327-331 contribute to the ATP site; these read HLGSG, DMR, and GIGEN. E378 lines the Mg(2+) pocket.

The protein belongs to the acetokinase family. As to quaternary structure, homodimer. The cofactor is Mg(2+). It depends on Mn(2+) as a cofactor.

Its subcellular location is the cytoplasm. The enzyme catalyses acetate + ATP = acetyl phosphate + ADP. The protein operates within metabolic intermediate biosynthesis; acetyl-CoA biosynthesis; acetyl-CoA from acetate: step 1/2. Catalyzes the formation of acetyl phosphate from acetate and ATP. Can also catalyze the reverse reaction. The protein is Acetate kinase of Nitrobacter hamburgensis (strain DSM 10229 / NCIMB 13809 / X14).